A 193-amino-acid chain; its full sequence is Thymidine kinase (193 aa).

Residues 9–16 and 87–90 contribute to the ATP site; these read STMNAGKS and DEAQ. The active-site Proton acceptor is the E88. Residues C145, C147, C182, and H185 each coordinate Zn(2+).

It belongs to the thymidine kinase family. As to quaternary structure, homotetramer.

The protein localises to the cytoplasm. It catalyses the reaction thymidine + ATP = dTMP + ADP + H(+). In Haemophilus influenzae (strain 86-028NP), this protein is Thymidine kinase.